Reading from the N-terminus, the 199-residue chain is uncharacterized protein (199 aa).

The N-terminal stretch at 1-23 is a signal peptide; sequence MSARAPKELRLALPPCLLNRTFA. N-linked (GlcNAc...) asparagine glycans are attached at residues asparagine 19 and asparagine 26. The Extracellular segment spans residues 24 to 60; the sequence is SHNASGGSSAGLRSSGAGGGTCITQVGQQLFQSFSST. A helical transmembrane segment spans residues 61-81; it reads LVLIVLVTLIFCLLVLSLSTF. Residues 82–199 are Cytoplasmic-facing; it reads HIHKRRMKKR…EGLLQTVVLS (118 aa). The disordered stretch occupies residues 93-190; it reads MQRAQEEYER…ASSCLDTPGE (98 aa). 2 stretches are compositionally biased toward basic and acidic residues: residues 95–106 and 124–135; these read RAQEEYERDHCS and HGKETRLERQPR. Over residues 147-163 the composition is skewed to low complexity; that stretch reads SSSSSSSSSPGLLCQGP. A compositionally biased stretch (pro residues) spans 164–176; sequence CAPPPPLPAPTPQ.

The protein resides in the membrane. This is an uncharacterized protein from Mus musculus (Mouse).